The sequence spans 63 residues: Large ribosomal subunit protein bL35 (63 aa).

This sequence belongs to the bacterial ribosomal protein bL35 family.

This is Large ribosomal subunit protein bL35 from Campylobacter fetus subsp. fetus (strain 82-40).